The primary structure comprises 394 residues: Na(+)/H(+) antiporter NhaA (394 aa).

11 helical membrane passes run 14–34 (AGGI…NSVF), 59–79 (LLMW…GMEV), 95–115 (IFPA…YWFI), 125–145 (GWAI…ALLS), 155–175 (FLLA…ALFF), 177–197 (NELS…LITM), 204–224 (GIIH…KSGV), 258–278 (WCAF…SLAG), 292–312 (ITLG…YLAV), 328–348 (VFAI…IAGL), and 362–382 (LSRL…YILL).

The protein belongs to the NhaA Na(+)/H(+) (TC 2.A.33) antiporter family.

The protein localises to the cell inner membrane. It carries out the reaction Na(+)(in) + 2 H(+)(out) = Na(+)(out) + 2 H(+)(in). Na(+)/H(+) antiporter that extrudes sodium in exchange for external protons. The chain is Na(+)/H(+) antiporter NhaA from Haemophilus ducreyi (strain 35000HP / ATCC 700724).